The primary structure comprises 117 residues: Immunoglobulin lambda variable 10-54 (117 aa).

An N-terminal signal peptide occupies residues 1–21 (MPWALLLLTLLTHSAVSVVQA). The tract at residues 20–43 (QAGLTQPPSVSKGLRQTATLTCTG) is framework-1. The Ig-like domain occupies 22-117 (GLTQPPSVSK…CSALDSSLSA (96 aa)). C41 and C108 are oxidised to a cystine. Positions 44-52 (NSNIVGNQG) are complementarity-determining-1. The interval 53–69 (AAWLQQHQGHPPKLLSY) is framework-2. The tract at residues 70–72 (RNN) is complementarity-determining-2. Positions 73–108 (NRPSGISERFSASRSGNTASLTITGLQPEDEADYYC) are framework-3. The segment at 109-117 (SALDSSLSA) is complementarity-determining-3.

Immunoglobulins are composed of two identical heavy chains and two identical light chains; disulfide-linked.

Its subcellular location is the secreted. It localises to the cell membrane. In terms of biological role, v region of the variable domain of immunoglobulin light chains that participates in the antigen recognition. Immunoglobulins, also known as antibodies, are membrane-bound or secreted glycoproteins produced by B lymphocytes. In the recognition phase of humoral immunity, the membrane-bound immunoglobulins serve as receptors which, upon binding of a specific antigen, trigger the clonal expansion and differentiation of B lymphocytes into immunoglobulins-secreting plasma cells. Secreted immunoglobulins mediate the effector phase of humoral immunity, which results in the elimination of bound antigens. The antigen binding site is formed by the variable domain of one heavy chain, together with that of its associated light chain. Thus, each immunoglobulin has two antigen binding sites with remarkable affinity for a particular antigen. The variable domains are assembled by a process called V-(D)-J rearrangement and can then be subjected to somatic hypermutations which, after exposure to antigen and selection, allow affinity maturation for a particular antigen. This is Immunoglobulin lambda variable 10-54 from Homo sapiens (Human).